The following is a 462-amino-acid chain: Bifunctional protein HldE (462 aa).

Residues 1–309 are ribokinase; the sequence is MKPRILVLGD…EYERSIRKAP (309 aa). 186–189 is a binding site for ATP; that stretch reads NKKE. Residue D254 is part of the active site. Residues 336-462 are cytidylyltransferase; sequence FTNGCFDILH…TAIVERMRSC (127 aa).

This sequence in the N-terminal section; belongs to the carbohydrate kinase PfkB family. It in the C-terminal section; belongs to the cytidylyltransferase family. In terms of assembly, homodimer.

It catalyses the reaction D-glycero-beta-D-manno-heptose 7-phosphate + ATP = D-glycero-beta-D-manno-heptose 1,7-bisphosphate + ADP + H(+). The catalysed reaction is D-glycero-beta-D-manno-heptose 1-phosphate + ATP + H(+) = ADP-D-glycero-beta-D-manno-heptose + diphosphate. Its pathway is nucleotide-sugar biosynthesis; ADP-L-glycero-beta-D-manno-heptose biosynthesis; ADP-L-glycero-beta-D-manno-heptose from D-glycero-beta-D-manno-heptose 7-phosphate: step 1/4. It participates in nucleotide-sugar biosynthesis; ADP-L-glycero-beta-D-manno-heptose biosynthesis; ADP-L-glycero-beta-D-manno-heptose from D-glycero-beta-D-manno-heptose 7-phosphate: step 3/4. In terms of biological role, catalyzes the phosphorylation of D-glycero-D-manno-heptose 7-phosphate at the C-1 position to selectively form D-glycero-beta-D-manno-heptose-1,7-bisphosphate. Catalyzes the ADP transfer from ATP to D-glycero-beta-D-manno-heptose 1-phosphate, yielding ADP-D-glycero-beta-D-manno-heptose. The polypeptide is Bifunctional protein HldE (Nitratiruptor sp. (strain SB155-2)).